A 303-amino-acid chain; its full sequence is L(+)-tartrate dehydratase subunit alpha (303 aa).

3 residues coordinate iron-sulfur cluster: C71, C190, and C277.

Belongs to the class-I fumarase family. Tetramer of two alpha and two beta subunits. The cofactor is iron-sulfur cluster.

It catalyses the reaction (2R,3R)-tartrate = oxaloacetate + H2O. The protein is L(+)-tartrate dehydratase subunit alpha (ttdA) of Escherichia coli O6:H1 (strain CFT073 / ATCC 700928 / UPEC).